Consider the following 290-residue polypeptide: Phosphoribulokinase (290 aa).

ATP is bound at residue 12–20 (GSSGAGTTS).

This sequence belongs to the phosphoribulokinase family.

The catalysed reaction is D-ribulose 5-phosphate + ATP = D-ribulose 1,5-bisphosphate + ADP + H(+). The protein operates within carbohydrate biosynthesis; Calvin cycle. The polypeptide is Phosphoribulokinase (cbbP) (Nitrobacter vulgaris).